We begin with the raw amino-acid sequence, 255 residues long: RNA polymerase sigma-F factor (255 aa).

The Polymerase core binding motif lies at 61–74 (DLFQIGCIGLLKSV). A DNA-binding region (H-T-H motif) is located at residues 221-240 (QSEVAERLGISQVQVSRLEK).

This sequence belongs to the sigma-70 factor family. As to quaternary structure, interacts transiently with the RNAP core.

With respect to regulation, interaction with SpoIIAB inhibits sigma-F activity throughout the cell before the formation of the asymmetric septum; after septation the interaction is confined to the mother cell, and sigma-F activity is released in the prespore. Fin, a second, forespore-specific anti-sigma factor is induced in 2 successive waves by sigma-F and sigma-G, by antagonizing sigma-F it allows the switch to sigma-G factor and progression to the late sporulation development stages. Sigma factors are initiation factors that promote the attachment of RNA polymerase to specific initiation sites and are then released. This sigma factor is responsible for the expression of sporulation specific genes. Interaction with SpoIIAB inhibits sigma-F activity throughout the cell before the formation of the asymmetric septum; after septation the interaction is confined to the mother cell, and sigma F activity is released in the prespore. Responsible for expression of csfB (the anti-sigma-G factor Gin). Associates with the RNAP core only in stationary phase cells. The polypeptide is RNA polymerase sigma-F factor (sigF) (Bacillus subtilis (strain 168)).